The primary structure comprises 179 residues: Shikimate kinase (179 aa).

12 to 17 (GVGKSK) is an ATP binding site. Mg(2+) is bound at residue serine 16. Aspartate 34, arginine 61, and glycine 83 together coordinate substrate. Arginine 131 lines the ATP pocket. Substrate is bound at residue arginine 147.

It belongs to the shikimate kinase family. Monomer. The cofactor is Mg(2+).

It localises to the cytoplasm. It carries out the reaction shikimate + ATP = 3-phosphoshikimate + ADP + H(+). The protein operates within metabolic intermediate biosynthesis; chorismate biosynthesis; chorismate from D-erythrose 4-phosphate and phosphoenolpyruvate: step 5/7. Its function is as follows. Catalyzes the specific phosphorylation of the 3-hydroxyl group of shikimic acid using ATP as a cosubstrate. The protein is Shikimate kinase of Leptospira borgpetersenii serovar Hardjo-bovis (strain JB197).